Consider the following 178-residue polypeptide: Large ribosomal subunit protein uL6 (178 aa).

It belongs to the universal ribosomal protein uL6 family. In terms of assembly, part of the 50S ribosomal subunit.

This protein binds to the 23S rRNA, and is important in its secondary structure. It is located near the subunit interface in the base of the L7/L12 stalk, and near the tRNA binding site of the peptidyltransferase center. The protein is Large ribosomal subunit protein uL6 of Streptococcus pneumoniae (strain 70585).